Consider the following 1133-residue polypeptide: Early transcription factor large subunit homolog (1133 aa).

The region spanning lysine 52–glutamine 352 is the Helicase ATP-binding domain. Tryptophan 99–serine 106 contacts ATP. The DEAH box motif lies at aspartate 281–histidine 284. The Helicase C-terminal domain occupies methionine 524–alanine 724.

Belongs to the DEAD box helicase family. DEAH subfamily.

It localises to the virion. The enzyme catalyses ATP + H2O = ADP + phosphate + H(+). Its function is as follows. Putative initation factor. The protein is Early transcription factor large subunit homolog of Ornithodoros (relapsing fever ticks).